The chain runs to 523 residues: Arabinose import ATP-binding protein AraG (523 aa).

2 consecutive ABC transporter domains span residues 20-255 (LAFR…MVGR) and 268-511 (IGSE…MLRT). Residue 52–59 (GENGAGKS) participates in ATP binding.

It belongs to the ABC transporter superfamily. Arabinose importer (TC 3.A.1.2.2) family. In terms of assembly, the complex is composed of two ATP-binding proteins (AraG), two transmembrane proteins (AraH) and a solute-binding protein (AraF).

It localises to the cell inner membrane. It carries out the reaction L-arabinose(out) + ATP + H2O = L-arabinose(in) + ADP + phosphate + H(+). Its function is as follows. Part of the ABC transporter complex AraFGH involved in arabinose import. Responsible for energy coupling to the transport system. In Yersinia pestis bv. Antiqua (strain Antiqua), this protein is Arabinose import ATP-binding protein AraG.